Reading from the N-terminus, the 155-residue chain is uncharacterized protein (155 aa).

Residues 4–65 (IDEVDEIILR…IIDHSFLGEF (62 aa)) enclose the HTH asnC-type domain. A DNA-binding region (H-T-H motif) is located at residues 23–42 (LTELSRKVGLTPAAIKNRVE).

This is an uncharacterized protein from Pyrococcus furiosus (strain ATCC 43587 / DSM 3638 / JCM 8422 / Vc1).